The primary structure comprises 302 residues: L-threonate dehydrogenase (302 aa).

NAD(+) contacts are provided by residues 7–35 (FHVG…TWGA) and threonine 102. Lysine 178 is a catalytic residue. NAD(+) is bound at residue lysine 246.

Belongs to the HIBADH-related family. L-threonate dehydrogenase subfamily.

It carries out the reaction L-threonate + NAD(+) = 2-dehydro-L-erythronate + NADH + H(+). Functionally, catalyzes oxidation of L-threonate to 2-oxo-tetronate. Can use either NAD(+) or NADP(+) as cosubstrate, with a preference for NAD(+). The chain is L-threonate dehydrogenase from Escherichia coli (strain K12).